The following is a 227-amino-acid chain: PKHD-type hydroxylase ACICU_00484 (227 aa).

The Fe2OG dioxygenase domain maps to 78-178 (DIIPPLFNRY…RIASFFWVQS (101 aa)). Fe cation is bound by residues histidine 96, aspartate 98, and histidine 159. A 2-oxoglutarate-binding site is contributed by arginine 169.

It depends on Fe(2+) as a cofactor. Requires L-ascorbate as cofactor.

The sequence is that of PKHD-type hydroxylase ACICU_00484 from Acinetobacter baumannii (strain ACICU).